A 399-amino-acid polypeptide reads, in one-letter code: F420-dependent formate dehydrogenase subunit beta (399 aa).

4Fe-4S ferredoxin-type domains follow at residues 287–307 and 339–367; these read TEYM…EACP and ERML…LAKI. The [4Fe-4S] cluster site is built by Cys296, Cys299, Cys302, Cys306, Cys348, Cys351, Cys354, and Cys358.

Belongs to the FrhB family. In terms of assembly, dimer of an alpha (FdhA) and a beta (FdhB) subunit. [4Fe-4S] cluster is required as a cofactor. It depends on FAD as a cofactor. The cofactor is Zn(2+).

The catalysed reaction is oxidized coenzyme F420-(gamma-L-Glu)(n) + formate + 2 H(+) = reduced coenzyme F420-(gamma-L-Glu)(n) + CO2. Its activity is regulated as follows. Is extremely sensitive to oxygen. Contains a FAD that is required for coenzyme F420-dependent activity but not for methyl viologen-dependent activity. Preincubation of the FAD-depleted enzyme with FAD restores coenzyme F420-dependent activity. Neither FMN nor FADH2 can replace FAD. Strongly inhibited by cyanide, azide, alpha,alpha-dipyridyl and 1,10-phenanthroline. Functionally, catalyzes the oxidation of formate to carbon dioxide, with coenzyme F420 as the electron acceptor. In vitro can also use methyl viologen, 7,8-didemethyl-8-hydroxy-5-deazariboflavin (or FO, a hydrolytic derivative of coenzyme F420), FMN and FAD as electron acceptors, but not NAD(+) or NADP(+). In Methanobacterium formicicum, this protein is F420-dependent formate dehydrogenase subunit beta.